A 231-amino-acid chain; its full sequence is uncharacterized protein (231 aa).

This sequence belongs to the DnaA family. HdA subfamily.

This is an uncharacterized protein from Haemophilus influenzae (strain ATCC 51907 / DSM 11121 / KW20 / Rd).